The following is a 770-amino-acid chain: Jhy protein (770 aa).

Disordered regions lie at residues 1–249, 295–438, 493–527, 595–647, and 708–740; these read MNKY…SKQY, TVQN…SFVS, HRHE…PQAE, ESQL…KRDV, and DYAK…KEGG. Residues 57-71 show a composition bias toward basic and acidic residues; sequence SWSDIKDQIQDKDME. A compositionally biased stretch (acidic residues) spans 72 to 85; that stretch reads PDSLEEDSPSETEE. A compositionally biased stretch (basic and acidic residues) spans 112 to 134; sequence HQVEDKYSDLRYDPNWKNKREEG. Residues 218-229 are compositionally biased toward low complexity; the sequence is SGLSQYLKSSSS. Residues 295 to 314 show a composition bias toward basic and acidic residues; the sequence is TVQNDKEVENTFMDPEDKWH. Residues 340 to 354 show a composition bias toward polar residues; the sequence is RGQSSDAANGQQPSR. Residues 355–370 are compositionally biased toward basic residues; the sequence is RTAKARVRKQRKHQKG. Low complexity predominate over residues 383 to 398; sequence QNNQNNPFQQPQNQRQ. The segment covering 410–438 has biased composition (polar residues); sequence AQTNASNPNLQDARTLTHNPKVTSDSFVS. Residues 493–509 show a composition bias toward basic and acidic residues; sequence HRHESPSQRAPQSDHHM. 2 stretches are compositionally biased toward basic residues: residues 510 to 521 and 625 to 642; these read NTHRSTKTKKPA and GKRH…LKGY.

In terms of tissue distribution, expressed in the brain, specifically in hypothalamus, pineal gland, and ependymal cells of the aqueduct of Sylvius, as well as in the choroid plexus of the third ventricle. Expressed in the ependymal cells lining the lateral ventricles (at protein level).

Required for the normal development of cilia in brain ependymal cells lining the ventricular surfaces. The protein is Jhy protein of Mus musculus (Mouse).